We begin with the raw amino-acid sequence, 68 residues long: Neuronal regeneration-related protein (68 aa).

A disordered region spans residues 21-54 (MEGRLPKGRLPVPKEVNRKKNDETNAASLTPLGS). A compositionally biased stretch (polar residues) spans 44-54 (TNAASLTPLGS).

As to quaternary structure, interacts with the latency-associated peptides (LAP) of TGFB1 and TGFB2; the interaction results in a decrease in TGFB autoinduction. Interacts with FLNA. Phosphorylated on Ser-59. Phosphorylation decreases stability and activity.

Its subcellular location is the cytoplasm. May have roles in neural function and cellular differentiation. Ectopic expression promotes axonal regeneration, induces differentiation of fibroblast into myofibroblast, induces myofibroblast ameboid migration, augments motility of gliomas, and increases retinoic-acid regulation of lipid-droplet biogenesis. Down-regulates the expression of TGFB1 and TGFB2 but not of TGFB3. May play a role in the regulation of alveolar generation. The sequence is that of Neuronal regeneration-related protein (NREP) from Macaca fascicularis (Crab-eating macaque).